A 155-amino-acid chain; its full sequence is V-type proton ATPase 16 kDa proteolipid subunit c (155 aa).

Over Met-1 to Tyr-10 the chain is Lumenal. Residues Ser-11–Gly-33 form a helical membrane-spanning segment. The Cytoplasmic segment spans residues Thr-34–Ser-55. The helical transmembrane segment at Ile-56 to Ile-76 threads the bilayer. The Lumenal segment spans residues Ala-77–Gln-92. Residues Leu-93 to Gly-114 form a helical membrane-spanning segment. The Cytoplasmic portion of the chain corresponds to Asp-115–Met-131. Residues Ile-132–Leu-152 form a helical membrane-spanning segment. At Ser-153–Lys-155 the chain is on the lumenal side.

Belongs to the V-ATPase proteolipid subunit family. As to quaternary structure, V-ATPase is a heteromultimeric enzyme made up of two complexes: the ATP-hydrolytic V1 complex and the proton translocation V0 complex. The V1 complex consists of three catalytic AB heterodimers that form a heterohexamer, three peripheral stalks each consisting of EG heterodimers, one central rotor including subunits D and F, and the regulatory subunits C and H. The proton translocation complex V0 consists of the proton transport subunit a, a ring of proteolipid subunits c9c'', rotary subunit d, subunits e and f, and the accessory subunits ATP6AP1/Ac45 and ATP6AP2/PRR. Interacts with the V0 complex V-ATPase subunit a4 ATP6V0A4. Interacts with LASS2. Interacts with RNF182; this interaction leads to ubiquitination and degradation via the proteasome pathway. Post-translationally, ubiquitinated by RNF182, leading to its degradation via the ubiquitin-proteasome pathway.

It localises to the cytoplasmic vesicle. The protein localises to the clathrin-coated vesicle membrane. The protein resides in the secretory vesicle. Its subcellular location is the synaptic vesicle membrane. Proton-conducting pore forming subunit of the V0 complex of vacuolar(H+)-ATPase (V-ATPase), a multisubunit enzyme composed of a peripheral complex (V1) that hydrolyzes ATP and a membrane integral complex (V0) that translocates protons. V-ATPase is responsible for acidifying and maintaining the pH of intracellular compartments and in some cell types, is targeted to the plasma membrane, where it is responsible for acidifying the extracellular environment. The protein is V-type proton ATPase 16 kDa proteolipid subunit c (Atp6v0c) of Mus musculus (Mouse).